A 149-amino-acid chain; its full sequence is Calmodulin (149 aa).

An N-acetylalanine modification is found at A2. EF-hand domains follow at residues 8 to 43 (EQIA…LGQN), 44 to 79 (PTEA…KMKD), 81 to 116 (DSEE…LGEK), and 117 to 149 (LTDE…MTSK). Positions 21, 23, 25, 27, 32, 57, 59, 61, 63, 68, 94, 96, 98, and 105 each coordinate Ca(2+). K116 bears the N6,N6,N6-trimethyllysine mark. 5 residues coordinate Ca(2+): D130, D132, D134, Q136, and E141.

The protein belongs to the calmodulin family.

Its function is as follows. Calmodulin mediates the control of a large number of enzymes, ion channels and other proteins by Ca(2+). Among the enzymes to be stimulated by the calmodulin-Ca(2+) complex are a number of protein kinases and phosphatases. The polypeptide is Calmodulin (Renilla reniformis (Sea pansy)).